Reading from the N-terminus, the 200-residue chain is Putative TLC domain-containing protein L438 (200 aa).

Residues 1–193 (MDYKQSNLFL…ILKILRAKLF (193 aa)) form the TLC domain. 6 helical membrane-spanning segments follow: residues 9 to 29 (FLFP…CGTF), 43 to 63 (THGI…LMIV), 74 to 94 (VHHF…YYLI), 96 to 116 (YLFA…AIKY), 131 to 151 (LAFF…LWFV), and 165 to 185 (YLIV…YRIL).

The protein resides in the membrane. The chain is Putative TLC domain-containing protein L438 from Acanthamoeba polyphaga mimivirus (APMV).